The primary structure comprises 221 residues: Endo-1,4-beta-xylanase A (221 aa).

The first 16 residues, 1 to 16 (MKFFATIAALVVGAVA), serve as a signal peptide directing secretion. A GH11 domain is found at 29–221 (PMLIERAGPG…GTGSASVTVS (193 aa)). Glu-114 (nucleophile) is an active-site residue. Residue Glu-208 is the Proton donor of the active site.

The protein belongs to the glycosyl hydrolase 11 (cellulase G) family.

It localises to the secreted. The catalysed reaction is Endohydrolysis of (1-&gt;4)-beta-D-xylosidic linkages in xylans.. It participates in glycan degradation; xylan degradation. In terms of biological role, endo-1,4-beta-xylanase involved in the hydrolysis of xylan, a major structural heterogeneous polysaccharide found in plant biomass representing the second most abundant polysaccharide in the biosphere, after cellulose. The polypeptide is Endo-1,4-beta-xylanase A (xynA) (Aureobasidium pullulans (Black yeast)).